The primary structure comprises 435 residues: ATP-dependent protease ATPase subunit HslU (435 aa).

Residues isoleucine 18, 60-65, aspartate 248, glutamate 313, and arginine 385 contribute to the ATP site; that span reads GVGKTE.

Belongs to the ClpX chaperone family. HslU subfamily. In terms of assembly, a double ring-shaped homohexamer of HslV is capped on each side by a ring-shaped HslU homohexamer. The assembly of the HslU/HslV complex is dependent on binding of ATP.

It is found in the cytoplasm. In terms of biological role, ATPase subunit of a proteasome-like degradation complex; this subunit has chaperone activity. The binding of ATP and its subsequent hydrolysis by HslU are essential for unfolding of protein substrates subsequently hydrolyzed by HslV. HslU recognizes the N-terminal part of its protein substrates and unfolds these before they are guided to HslV for hydrolysis. This chain is ATP-dependent protease ATPase subunit HslU, found in Roseobacter denitrificans (strain ATCC 33942 / OCh 114) (Erythrobacter sp. (strain OCh 114)).